We begin with the raw amino-acid sequence, 143 residues long: Large ribosomal subunit protein uL11 (143 aa).

This sequence belongs to the universal ribosomal protein uL11 family. In terms of assembly, part of the ribosomal stalk of the 50S ribosomal subunit. Interacts with L10 and the large rRNA to form the base of the stalk. L10 forms an elongated spine to which L12 dimers bind in a sequential fashion forming a multimeric L10(L12)X complex. In terms of processing, one or more lysine residues are methylated.

Functionally, forms part of the ribosomal stalk which helps the ribosome interact with GTP-bound translation factors. This chain is Large ribosomal subunit protein uL11, found in Burkholderia ambifaria (strain MC40-6).